The chain runs to 178 residues: Large ribosomal subunit protein uL6 (178 aa).

The protein belongs to the universal ribosomal protein uL6 family. Part of the 50S ribosomal subunit.

Functionally, this protein binds to the 23S rRNA, and is important in its secondary structure. It is located near the subunit interface in the base of the L7/L12 stalk, and near the tRNA binding site of the peptidyltransferase center. This chain is Large ribosomal subunit protein uL6, found in Methanobrevibacter smithii (strain ATCC 35061 / DSM 861 / OCM 144 / PS).